The following is a 358-amino-acid chain: NADH-quinone oxidoreductase subunit H (358 aa).

A run of 8 helical transmembrane segments spans residues 29-49, 95-115, 130-150, 176-196, 206-226, 258-280, 297-317, and 334-354; these read LIKIICVVLPLLGAVAYLTLW, GLFYLGPVMAIMPALGAWAVI, LLLVMAITSIEVYGVIIAGWA, FCFLVVIMVSGSMNLTEIVAV, GLGFLSWNWLPLFPIFIVYLI, GFAIFFLAEYASMWLVSILAVVM, GWIWLGIKTFLVVSMFIWIRA, and IFIPVTLVWLLVVGAWLLSPW.

It belongs to the complex I subunit 1 family. As to quaternary structure, NDH-1 is composed of 14 different subunits. Subunits NuoA, H, J, K, L, M, N constitute the membrane sector of the complex.

It is found in the cell inner membrane. It catalyses the reaction a quinone + NADH + 5 H(+)(in) = a quinol + NAD(+) + 4 H(+)(out). In terms of biological role, NDH-1 shuttles electrons from NADH, via FMN and iron-sulfur (Fe-S) centers, to quinones in the respiratory chain. The immediate electron acceptor for the enzyme in this species is believed to be ubiquinone. Couples the redox reaction to proton translocation (for every two electrons transferred, four hydrogen ions are translocated across the cytoplasmic membrane), and thus conserves the redox energy in a proton gradient. This subunit may bind ubiquinone. This chain is NADH-quinone oxidoreductase subunit H, found in Acidovorax sp. (strain JS42).